Here is a 300-residue protein sequence, read N- to C-terminus: Manganese-binding lipoprotein MntA (300 aa).

The signal sequence occupies residues Met1–Gly19. A lipid anchor (N-palmitoyl cysteine) is attached at Cys20. The S-diacylglycerol cysteine moiety is linked to residue Cys20. The Mn(2+) site is built by His68, His130, Glu196, and Asp271.

Belongs to the bacterial solute-binding protein 9 family.

It localises to the cell membrane. Its function is as follows. Probably part of ATP-binding cassette (ABC) transport system MntABCD involved in manganese import. Binds manganese and delivers it to the membrane permease for translocation into the cytoplasm. This chain is Manganese-binding lipoprotein MntA (mntA), found in Halalkalibacterium halodurans (strain ATCC BAA-125 / DSM 18197 / FERM 7344 / JCM 9153 / C-125) (Bacillus halodurans).